The sequence spans 533 residues: Large neutral amino acids transporter small subunit 2 (533 aa).

The disordered stretch occupies residues 1-33 (MEKGTRQRNNTAKNHPDRGSDTSPEAEASSGGG). The Cytoplasmic segment spans residues 1-45 (MEKGTRQRNNTAKNHPDRGSDTSPEAEASSGGGGVALKKEIGLVS). A phosphoserine mark is found at Ser-20, Ser-23, Ser-29, and Ser-30. Residues 46–66 (ACGIIVGNIIGSGIFVSPKGV) form a helical membrane-spanning segment. Ile-54 lines the L-leucine pocket. The Extracellular portion of the chain corresponds to 67–74 (LENAGSVG). The chain crosses the membrane as a helical span at residues 75–96 (LALIVWIVTGVITAVGALCYAE). Residues 97–117 (LGVTIPKSGGDYSYVKDIFGG) lie on the Cytoplasmic side of the membrane. The helical transmembrane segment at 118–150 (LAGFLRLWIAVLVIYPTNQAVIALTFSNYVLQP) threads the bilayer. Asn-135 serves as a coordination point for L-tryptophan. At 151-158 (LFPTCFPP) the chain is on the extracellular side. The helical transmembrane segment at 159–179 (ESGLRLLAAICLLLLTWVNCS) threads the bilayer. The Cytoplasmic portion of the chain corresponds to 180-182 (SVR). A helical membrane pass occupies residues 183–211 (WATRVQDIFTAGKLLALALIIIMGVVQIC). Residues 212–231 (KGEFFWLEPKNAFENFQEPD) lie on the Extracellular side of the membrane. Residues 232–253 (IGLVALAFLQGSFAYGGWNFLN) traverse the membrane as a helical segment. Gly-247 serves as a coordination point for L-leucine. Residues 254-266 (YVTEELVDPYKNL) lie on the Cytoplasmic side of the membrane. The helical transmembrane segment at 267–288 (PRAIFISIPLVTFVYVFANIAY) threads the bilayer. At 289 to 313 (VTAMSPQELLASNAVAVTFGEKLLG) the chain is on the extracellular side. A helical transmembrane segment spans residues 314–339 (VMAWIMPISVALSTFGGVNGSLFTSS). Residues 340-365 (RLFFAGAREGHLPSVLAMIHVKRCTP) lie on the Cytoplasmic side of the membrane. Residues 366–383 (IPALLFTCLSTLLMLVTS) form a helical membrane-spanning segment. Topologically, residues 384–387 (DMYT) are extracellular. Residues 388–409 (LINYVGFINYLFYGVTVAGQIV) traverse the membrane as a helical segment. Asn-396 contributes to the L-tryptophan binding site. Over 410–424 (LRWKKPDIPRPIKIS) the chain is Cytoplasmic. 2 consecutive transmembrane segments (helical) span residues 425–447 (LLFPIIYLLFWAFLLIFSLWSEP) and 448–467 (VVCGIGLAIMLTGVPVYFLG). Over 468–533 (VYWQHKPKCF…VKDPDSEEQP (66 aa)) the chain is Cytoplasmic. The segment at 500-533 (GDSGTEETIDDVEEQHKPIFQPTPVKDPDSEEQP) is disordered. The segment covering 502-512 (SGTEETIDDVE) has biased composition (acidic residues). Ser-529 carries the post-translational modification Phosphoserine.

This sequence belongs to the amino acid-polyamine-organocation (APC) superfamily. L-type amino acid transporter (LAT) (TC 2.A.3.8) family. Disulfide-linked heterodimer composed of the catalytic light chain subunit SLC7A8 and the heavy chain subunit SLC3A2. SLC3A2 acts as a chaperone for correct plasma membrane trafficking and stabilization of SLC7A8 and modulates the substrate affinity and specificity of SLC7A8. ICAM-1 associates with the heterodimer SLC3A2/SLC7A8; facilitates leucine uptake. In terms of tissue distribution, expression is seen in jejunum mucosa and the epithelial cells of the jejunum, ileum and colon, as well as in kidney, placenta, brain, testis and skeletal muscle. Expressed in retina, inner blood-retinal barrier of retina, retinal vascular endothelial cells. Also expressed in the intestinal epithelial cell line IEC-6 and in the retinal capillary endothelial cell line TR-iBRB2.

It is found in the cell membrane. The protein localises to the basolateral cell membrane. It carries out the reaction L-dopa(out) + L-phenylalanine(in) = L-dopa(in) + L-phenylalanine(out). It catalyses the reaction 3,3'-diiodo-L-thyronine(out) = 3,3'-diiodo-L-thyronine(in). The catalysed reaction is L-histidine(in) + L-phenylalanine(out) = L-histidine(out) + L-phenylalanine(in). The enzyme catalyses L-tryptophan(in) + L-phenylalanine(out) = L-tryptophan(out) + L-phenylalanine(in). It carries out the reaction L-isoleucine(in) + L-phenylalanine(out) = L-isoleucine(out) + L-phenylalanine(in). It catalyses the reaction L-valine(in) + L-phenylalanine(out) = L-valine(out) + L-phenylalanine(in). The catalysed reaction is L-leucine(in) + L-phenylalanine(out) = L-leucine(out) + L-phenylalanine(in). The enzyme catalyses L-glutamine(in) + L-phenylalanine(out) = L-glutamine(out) + L-phenylalanine(in). It carries out the reaction L-cysteine(in) + L-phenylalanine(out) = L-cysteine(out) + L-phenylalanine(in). It catalyses the reaction L-phenylalanine(out) + L-methionine(in) = L-phenylalanine(in) + L-methionine(out). The catalysed reaction is L-leucine(out) + L-methionine(in) = L-leucine(in) + L-methionine(out). The enzyme catalyses L-cysteine(out) + L-methionine(in) = L-cysteine(in) + L-methionine(out). It carries out the reaction S-methylmercury-L-cysteine(out) + L-methionine(in) = S-methylmercury-L-cysteine(in) + L-methionine(out). It catalyses the reaction S-methylmercury-L-cysteine(in) + L-leucine(out) = S-methylmercury-L-cysteine(out) + L-leucine(in). The catalysed reaction is S-methylmercury-L-cysteine(in) + L-phenylalanine(out) = S-methylmercury-L-cysteine(out) + L-phenylalanine(in). The enzyme catalyses L-phenylalanine(out) + L-serine(in) = L-phenylalanine(in) + L-serine(out). It carries out the reaction L-phenylalanine(out) + glycine(in) = L-phenylalanine(in) + glycine(out). It catalyses the reaction L-phenylalanine(out) + L-alanine(in) = L-phenylalanine(in) + L-alanine(out). The catalysed reaction is 3,3',5-triiodo-L-thyronine(out) = 3,3',5-triiodo-L-thyronine(in). Leucine transport activity is inhibited by 2-amino-bicyclo-(2,2,1)-heptane-2-carboxylate (BCH), glycine, L-isomers of the neutral amino acids and histidine. Functionally, associates with SLC3A2 to form a functional heterodimeric complex that translocates small and large neutral amino acids with broad specificity and a stoichiometry of 1:1. Functions as amino acid antiporter mediating the influx of extracellular essential amino acids mainly in exchange with the efflux of highly concentrated intracellular amino acids. Has relatively symmetrical selectivities but strongly asymmetrical substrate affinities at both the intracellular and extracellular sides of the transporter. This asymmetry allows SLC7A8 to regulate intracellular amino acid pools (mM concentrations) by exchange with external amino acids (uM concentration range), equilibrating the relative concentrations of different amino acids across the plasma membrane instead of mediating their net uptake. May play an essential role in the reabsorption of neutral amino acids from the epithelial cells to the bloodstream in the kidney. Involved in the uptake of methylmercury (MeHg) when administered as the L-cysteine or D,L-homocysteine complexes, and hence plays a role in metal ion homeostasis and toxicity. Involved in the cellular activity of small molecular weight nitrosothiols, via the stereoselective transport of L-nitrosocysteine (L-CNSO) across the transmembrane. Imports the thyroid hormone diiodothyronine (T2) and to a smaller extent triiodothyronine (T3) but not rT 3 or thyroxine (T4). Mediates the uptake of L-DOPA. May participate in auditory function. The chain is Large neutral amino acids transporter small subunit 2 (Slc7a8) from Rattus norvegicus (Rat).